The sequence spans 208 residues: Thiamine-phosphate synthase (208 aa).

4-amino-2-methyl-5-(diphosphooxymethyl)pyrimidine-binding positions include 37–41 and asparagine 73; that span reads QYREK. Mg(2+)-binding residues include aspartate 74 and aspartate 93. A 4-amino-2-methyl-5-(diphosphooxymethyl)pyrimidine-binding site is contributed by serine 112. 139-141 serves as a coordination point for 2-[(2R,5Z)-2-carboxy-4-methylthiazol-5(2H)-ylidene]ethyl phosphate; that stretch reads TIS. Lysine 142 provides a ligand contact to 4-amino-2-methyl-5-(diphosphooxymethyl)pyrimidine. 2-[(2R,5Z)-2-carboxy-4-methylthiazol-5(2H)-ylidene]ethyl phosphate-binding positions include glycine 171 and 191–192; that span reads IS.

This sequence belongs to the thiamine-phosphate synthase family. It depends on Mg(2+) as a cofactor.

It carries out the reaction 2-[(2R,5Z)-2-carboxy-4-methylthiazol-5(2H)-ylidene]ethyl phosphate + 4-amino-2-methyl-5-(diphosphooxymethyl)pyrimidine + 2 H(+) = thiamine phosphate + CO2 + diphosphate. It catalyses the reaction 2-(2-carboxy-4-methylthiazol-5-yl)ethyl phosphate + 4-amino-2-methyl-5-(diphosphooxymethyl)pyrimidine + 2 H(+) = thiamine phosphate + CO2 + diphosphate. The catalysed reaction is 4-methyl-5-(2-phosphooxyethyl)-thiazole + 4-amino-2-methyl-5-(diphosphooxymethyl)pyrimidine + H(+) = thiamine phosphate + diphosphate. Its pathway is cofactor biosynthesis; thiamine diphosphate biosynthesis; thiamine phosphate from 4-amino-2-methyl-5-diphosphomethylpyrimidine and 4-methyl-5-(2-phosphoethyl)-thiazole: step 1/1. Functionally, condenses 4-methyl-5-(beta-hydroxyethyl)thiazole monophosphate (THZ-P) and 2-methyl-4-amino-5-hydroxymethyl pyrimidine pyrophosphate (HMP-PP) to form thiamine monophosphate (TMP). In Listeria welshimeri serovar 6b (strain ATCC 35897 / DSM 20650 / CCUG 15529 / CIP 8149 / NCTC 11857 / SLCC 5334 / V8), this protein is Thiamine-phosphate synthase.